The sequence spans 128 residues: Small ribosomal subunit protein bS6 (128 aa).

This sequence belongs to the bacterial ribosomal protein bS6 family.

Binds together with bS18 to 16S ribosomal RNA. In Thermotoga petrophila (strain ATCC BAA-488 / DSM 13995 / JCM 10881 / RKU-1), this protein is Small ribosomal subunit protein bS6.